The primary structure comprises 171 residues: Small ribosomal subunit protein uS4 (171 aa).

The region spanning 103 to 167 (RRLQTLVHKR…SPMKKQIEAA (65 aa)) is the S4 RNA-binding domain.

The protein belongs to the universal ribosomal protein uS4 family. Part of the 30S ribosomal subunit. Contacts protein S5. The interaction surface between S4 and S5 is involved in control of translational fidelity.

In terms of biological role, one of the primary rRNA binding proteins, it binds directly to 16S rRNA where it nucleates assembly of the body of the 30S subunit. Functionally, with S5 and S12 plays an important role in translational accuracy. The protein is Small ribosomal subunit protein uS4 of Methanothermobacter thermautotrophicus (strain ATCC 29096 / DSM 1053 / JCM 10044 / NBRC 100330 / Delta H) (Methanobacterium thermoautotrophicum).